Here is a 249-residue protein sequence, read N- to C-terminus: 5'-nucleotidase SurE (249 aa).

Residues Asp-8, Asp-9, Ser-39, and Asn-91 each coordinate a divalent metal cation.

This sequence belongs to the SurE nucleotidase family. Requires a divalent metal cation as cofactor.

The protein localises to the cytoplasm. The catalysed reaction is a ribonucleoside 5'-phosphate + H2O = a ribonucleoside + phosphate. Its function is as follows. Nucleotidase that shows phosphatase activity on nucleoside 5'-monophosphates. The polypeptide is 5'-nucleotidase SurE (Haemophilus influenzae (strain ATCC 51907 / DSM 11121 / KW20 / Rd)).